We begin with the raw amino-acid sequence, 635 residues long: 1-deoxy-D-xylulose-5-phosphate synthase (635 aa).

Thiamine diphosphate contacts are provided by residues H78 and 119-121 (GHS). D151 serves as a coordination point for Mg(2+). Residues 152–153 (GA), N180, Y289, and E371 each bind thiamine diphosphate. A Mg(2+)-binding site is contributed by N180.

It belongs to the transketolase family. DXPS subfamily. As to quaternary structure, homodimer. Mg(2+) serves as cofactor. It depends on thiamine diphosphate as a cofactor.

It catalyses the reaction D-glyceraldehyde 3-phosphate + pyruvate + H(+) = 1-deoxy-D-xylulose 5-phosphate + CO2. The protein operates within metabolic intermediate biosynthesis; 1-deoxy-D-xylulose 5-phosphate biosynthesis; 1-deoxy-D-xylulose 5-phosphate from D-glyceraldehyde 3-phosphate and pyruvate: step 1/1. In terms of biological role, catalyzes the acyloin condensation reaction between C atoms 2 and 3 of pyruvate and glyceraldehyde 3-phosphate to yield 1-deoxy-D-xylulose-5-phosphate (DXP). This Bartonella tribocorum (strain CIP 105476 / IBS 506) protein is 1-deoxy-D-xylulose-5-phosphate synthase.